The primary structure comprises 360 residues: Peptide chain release factor 1 (360 aa).

At Gln-235 the chain carries N5-methylglutamine.

Belongs to the prokaryotic/mitochondrial release factor family. Methylated by PrmC. Methylation increases the termination efficiency of RF1.

The protein resides in the cytoplasm. Peptide chain release factor 1 directs the termination of translation in response to the peptide chain termination codons UAG and UAA. This Burkholderia multivorans (strain ATCC 17616 / 249) protein is Peptide chain release factor 1.